The following is a 452-amino-acid chain: MLNDTIVAISSPIGTGAIGVVRISGDHVKNIIDQALKRKKYTPKKMYYGWLYDKEGEKVDEITWVYHSQPHSYTGEDMLEIFCHGGKLITYAVLNTIIKYGARQALPGEFTKRAVLNGKMDLIKAEAVNNVITSETEISLKASFNQLKNAVSEKIKDIKNSLLNISAQIEVEMDYPDDIEFEDHDLKNKLVHIVNSMNQLLKEAENGIIAVEGVRTVIVGKPNSGKSTLLNALLRKDRAIVTDIPGTTRDTIEENLNINGIYIRLIDTAGIRYTEDTLERVGIERTINSIKNSHLILFVLDGTTPFTQEDELIYNKLNELGDKTVIIILNKSDSPNFTENNYLSLKQKNPNDFVIISAKNGAIKNLENKIYEKFFEKVNIEEPTLTNQRQKITLESSKEFVLNAINSLEKGFSNDIIMYDVRKALEKIYELSGENYTEELLDKIFSTFCVGK.

3 residues coordinate (6S)-5-formyl-5,6,7,8-tetrahydrofolate: Arg-22, Glu-80, and Lys-119. A TrmE-type G domain is found at 213–375; it reads GVRTVIVGKP…LENKIYEKFF (163 aa). Asn-223 serves as a coordination point for K(+). Residues 223-228, 242-248, and 267-270 contribute to the GTP site; these read NSGKST, TDIPGTT, and DTAG. Mg(2+) is bound at residue Ser-227. Positions 242, 244, and 247 each coordinate K(+). Mg(2+) is bound at residue Thr-248. Lys-452 lines the (6S)-5-formyl-5,6,7,8-tetrahydrofolate pocket.

This sequence belongs to the TRAFAC class TrmE-Era-EngA-EngB-Septin-like GTPase superfamily. TrmE GTPase family. Homodimer. Heterotetramer of two MnmE and two MnmG subunits. K(+) serves as cofactor.

Its subcellular location is the cytoplasm. Exhibits a very high intrinsic GTPase hydrolysis rate. Involved in the addition of a carboxymethylaminomethyl (cmnm) group at the wobble position (U34) of certain tRNAs, forming tRNA-cmnm(5)s(2)U34. The sequence is that of tRNA modification GTPase MnmE from Petrotoga mobilis (strain DSM 10674 / SJ95).